A 366-amino-acid polypeptide reads, in one-letter code: Chorismate synthase (366 aa).

Residues arginine 48 and arginine 54 each contribute to the NADP(+) site. FMN contacts are provided by residues 125–127, 238–239, glycine 278, 293–297, and arginine 319; these read RSS, NA, and KPTSS.

It belongs to the chorismate synthase family. Homotetramer. FMNH2 serves as cofactor.

The catalysed reaction is 5-O-(1-carboxyvinyl)-3-phosphoshikimate = chorismate + phosphate. The protein operates within metabolic intermediate biosynthesis; chorismate biosynthesis; chorismate from D-erythrose 4-phosphate and phosphoenolpyruvate: step 7/7. Its function is as follows. Catalyzes the anti-1,4-elimination of the C-3 phosphate and the C-6 proR hydrogen from 5-enolpyruvylshikimate-3-phosphate (EPSP) to yield chorismate, which is the branch point compound that serves as the starting substrate for the three terminal pathways of aromatic amino acid biosynthesis. This reaction introduces a second double bond into the aromatic ring system. In Paraburkholderia xenovorans (strain LB400), this protein is Chorismate synthase.